A 555-amino-acid polypeptide reads, in one-letter code: DNA ligase (555 aa).

Residue glutamate 247 coordinates ATP. The active-site N6-AMP-lysine intermediate is lysine 249. Positions 254, 269, 298, 337, 411, and 417 each coordinate ATP.

The protein belongs to the ATP-dependent DNA ligase family. Mg(2+) is required as a cofactor.

It catalyses the reaction ATP + (deoxyribonucleotide)n-3'-hydroxyl + 5'-phospho-(deoxyribonucleotide)m = (deoxyribonucleotide)n+m + AMP + diphosphate.. DNA ligase that seals nicks in double-stranded DNA during DNA replication, DNA recombination and DNA repair. The protein is DNA ligase of Archaeoglobus fulgidus (strain ATCC 49558 / DSM 4304 / JCM 9628 / NBRC 100126 / VC-16).